Consider the following 442-residue polypeptide: ATP-dependent RNA helicase SUB2-2 (442 aa).

The Q motif signature appears at 58–86; sequence TGFKDFLLKPELARAIIDCGFEHPSEVQQ. One can recognise a Helicase ATP-binding domain in the interval 89 to 264; it reads IPQSIHGTDV…RRFLQNPLEI (176 aa). 102–109 lines the ATP pocket; it reads AKSGLGKT. The short motif at 211–214 is the DECD box element; sequence DECD. In terms of domain architecture, Helicase C-terminal spans 292–437; sequence KLAQLLDDLE…EFPEEGIDPS (146 aa).

The protein belongs to the DEAD box helicase family. DECD subfamily.

It localises to the nucleus. The enzyme catalyses ATP + H2O = ADP + phosphate + H(+). ATP-binding RNA helicase involved in transcription elongation and required for the export of mRNA out of the nucleus. SUB2 also plays a role in pre-mRNA splicing and spliceosome assembly. May be involved in rDNA and telomeric silencing, and maintenance of genome integrity. The chain is ATP-dependent RNA helicase SUB2-2 (SUB2-2) from Vanderwaltozyma polyspora (strain ATCC 22028 / DSM 70294 / BCRC 21397 / CBS 2163 / NBRC 10782 / NRRL Y-8283 / UCD 57-17) (Kluyveromyces polysporus).